Here is a 344-residue protein sequence, read N- to C-terminus: Dihydroorotase (344 aa).

Zn(2+)-binding residues include His-13 and His-15. Substrate contacts are provided by residues 15-17 (HLR) and Asn-41. Zn(2+) contacts are provided by Lys-99, His-136, and His-174. N6-carboxylysine is present on Lys-99. His-136 is a substrate binding site. Leu-219 is a substrate binding site. Asp-247 provides a ligand contact to Zn(2+). Asp-247 is a catalytic residue. Substrate-binding residues include His-251 and Ala-263.

This sequence belongs to the metallo-dependent hydrolases superfamily. DHOase family. Class II DHOase subfamily. As to quaternary structure, homodimer. It depends on Zn(2+) as a cofactor.

It carries out the reaction (S)-dihydroorotate + H2O = N-carbamoyl-L-aspartate + H(+). It functions in the pathway pyrimidine metabolism; UMP biosynthesis via de novo pathway; (S)-dihydroorotate from bicarbonate: step 3/3. In terms of biological role, catalyzes the reversible cyclization of carbamoyl aspartate to dihydroorotate. The polypeptide is Dihydroorotase (Acinetobacter baylyi (strain ATCC 33305 / BD413 / ADP1)).